The primary structure comprises 527 residues: Ribonuclease Y (527 aa).

A helical transmembrane segment spans residues Ile-21 to Val-41. Residues Arg-78–Glu-97 form a disordered region. Residues Thr-217–Val-302 enclose the KH domain. Positions Val-343–Ala-436 constitute an HD domain.

It belongs to the RNase Y family.

The protein localises to the cell membrane. In terms of biological role, endoribonuclease that initiates mRNA decay. This chain is Ribonuclease Y, found in Dehalococcoides mccartyi (strain ATCC BAA-2100 / JCM 16839 / KCTC 5957 / BAV1).